Reading from the N-terminus, the 621-residue chain is Anthranilate synthase alpha subunit 2, chloroplastic (621 aa).

The N-terminal 87 residues, 1-87 (MSAVSISAVK…SEEQFTKFKK (87 aa)), are a transit peptide targeting the chloroplast.

Belongs to the anthranilate synthase component I family. As to quaternary structure, heterotetramer consisting of two non-identical subunits: a beta subunit and a large alpha subunit.

It localises to the plastid. Its subcellular location is the chloroplast. The catalysed reaction is chorismate + L-glutamine = anthranilate + pyruvate + L-glutamate + H(+). It participates in amino-acid biosynthesis; L-tryptophan biosynthesis; L-tryptophan from chorismate: step 1/5. Its activity is regulated as follows. Feedback inhibition by tryptophan. Its function is as follows. Part of a heterotetrameric complex that catalyzes the two-step biosynthesis of anthranilate, an intermediate in the biosynthesis of L-tryptophan. In the first step, the glutamine-binding beta subunit of anthranilate synthase (AS) provides the glutamine amidotransferase activity which generates ammonia as a substrate that, along with chorismate, is used in the second step, catalyzed by the large alpha subunit of AS to produce anthranilate. In Arabidopsis thaliana (Mouse-ear cress), this protein is Anthranilate synthase alpha subunit 2, chloroplastic (ASA2).